A 389-amino-acid polypeptide reads, in one-letter code: Phospho-N-acetylmuramoyl-pentapeptide-transferase (389 aa).

10 consecutive transmembrane segments (helical) span residues 25–45, 74–94, 97–117, 134–154, 190–210, 222–242, 259–279, 286–306, 311–331, and 366–386; these read RAVMANLTALVIGLAAGPWVI, MGGVLVLVSIAISTVLWCDWG, FIWVVMLVTLGYGAIGWVDDY, FFWQTLIGLVAAVYLAFSVSE, VSYPLGVAGFIVLTYLVIVGS, GLVIMPVVLVGGALGAFAYVM, AGELLIFCSAMAGAGLAFLWF, VFMGDVGALALGGALGTVAVI, IVLFVMGGIFVVETVSVMLQV, and QVTVRFWIVTMLLVLIGLSTL.

The protein belongs to the glycosyltransferase 4 family. MraY subfamily. Requires Mg(2+) as cofactor.

It localises to the cell inner membrane. It carries out the reaction UDP-N-acetyl-alpha-D-muramoyl-L-alanyl-gamma-D-glutamyl-meso-2,6-diaminopimeloyl-D-alanyl-D-alanine + di-trans,octa-cis-undecaprenyl phosphate = di-trans,octa-cis-undecaprenyl diphospho-N-acetyl-alpha-D-muramoyl-L-alanyl-D-glutamyl-meso-2,6-diaminopimeloyl-D-alanyl-D-alanine + UMP. It participates in cell wall biogenesis; peptidoglycan biosynthesis. Its function is as follows. Catalyzes the initial step of the lipid cycle reactions in the biosynthesis of the cell wall peptidoglycan: transfers peptidoglycan precursor phospho-MurNAc-pentapeptide from UDP-MurNAc-pentapeptide onto the lipid carrier undecaprenyl phosphate, yielding undecaprenyl-pyrophosphoryl-MurNAc-pentapeptide, known as lipid I. The polypeptide is Phospho-N-acetylmuramoyl-pentapeptide-transferase (Cupriavidus pinatubonensis (strain JMP 134 / LMG 1197) (Cupriavidus necator (strain JMP 134))).